The sequence spans 619 residues: Long-chain fatty acid transport protein 6 (619 aa).

Helical transmembrane passes span 22–42 (LLFP…LIII) and 119–139 (VHVW…NTNI). Residue 221-232 (YIFTSGTTGLPK) participates in AMP binding.

It belongs to the ATP-dependent AMP-binding enzyme family. In terms of tissue distribution, strongly expressed in heart and localizes to cardiac myocytes. Expressed at moderate levels in placenta, testis, and adrenal glands. Expressed at very low levels in kidney, bladder and uterus.

It is found in the cell membrane. Its subcellular location is the sarcolemma. The enzyme catalyses a fatty acid(in) = a fatty acid(out). It catalyses the reaction hexadecanoate(out) = hexadecanoate(in). The catalysed reaction is (9Z)-octadecenoate(out) = (9Z)-octadecenoate(in). It carries out the reaction (9Z,12Z)-octadecadienoate(out) = (9Z,12Z)-octadecadienoate(in). The enzyme catalyses a very long-chain fatty acid + ATP + CoA = a very long-chain fatty acyl-CoA + AMP + diphosphate. It catalyses the reaction tetracosanoate + ATP + CoA = tetracosanoyl-CoA + AMP + diphosphate. The catalysed reaction is a long-chain fatty acid + ATP + CoA = a long-chain fatty acyl-CoA + AMP + diphosphate. It carries out the reaction (5Z,8Z,11Z,14Z)-eicosatetraenoate + ATP + CoA = (5Z,8Z,11Z,14Z)-eicosatetraenoyl-CoA + AMP + diphosphate. The enzyme catalyses (9Z)-octadecenoate + ATP + CoA = (9Z)-octadecenoyl-CoA + AMP + diphosphate. Its function is as follows. Mediates the import of long-chain fatty acids (LCFA) into the cell by facilitating their transport at the plasma membrane. Also functions as an acyl-CoA ligase catalyzing the ATP-dependent formation of fatty acyl-CoA using LCFA and very-long-chain fatty acids (VLCFA) as substrates. Plays a pivotal role in regulating available LCFA substrates from exogenous sources in tissues undergoing high levels of beta-oxidation such as the heart. The protein is Long-chain fatty acid transport protein 6 (SLC27A6) of Homo sapiens (Human).